Consider the following 233-residue polypeptide: Small ribosomal subunit protein uS3 (233 aa).

In terms of domain architecture, KH type-2 spans 28-96 (EFADNLDSDF…LRKVVADIAG (69 aa)).

Belongs to the universal ribosomal protein uS3 family. In terms of assembly, part of the 30S ribosomal subunit. Forms a tight complex with proteins S10 and S14.

Its function is as follows. Binds the lower part of the 30S subunit head. Binds mRNA in the 70S ribosome, positioning it for translation. The protein is Small ribosomal subunit protein uS3 of Shigella flexneri.